Here is a 545-residue protein sequence, read N- to C-terminus: Luciferin 4-monooxygenase (545 aa).

The Microbody targeting signal signature appears at 543–545 (SKL).

Belongs to the ATP-dependent AMP-binding enzyme family. Mg(2+) is required as a cofactor.

The protein resides in the peroxisome. The enzyme catalyses firefly D-luciferin + ATP + O2 = firefly oxyluciferin + hnu + AMP + CO2 + diphosphate. In terms of biological role, produces green light with a wavelength of 562 nm. This chain is Luciferin 4-monooxygenase, found in Photuris pensylvanica (Pennsylania firefly).